We begin with the raw amino-acid sequence, 198 residues long: Ribonuclease HII (198 aa).

The RNase H type-2 domain occupies 14 to 198 (GVIAGVDEVG…RNFAPISRAL (185 aa)). Residues aspartate 20, glutamate 21, and aspartate 112 each coordinate a divalent metal cation.

This sequence belongs to the RNase HII family. It depends on Mn(2+) as a cofactor. Mg(2+) serves as cofactor.

The protein resides in the cytoplasm. The enzyme catalyses Endonucleolytic cleavage to 5'-phosphomonoester.. In terms of biological role, endonuclease that specifically degrades the RNA of RNA-DNA hybrids. This chain is Ribonuclease HII, found in Wolbachia sp. subsp. Drosophila simulans (strain wRi).